A 375-amino-acid chain; its full sequence is tRNA-specific 2-thiouridylase MnmA (375 aa).

Residues 8 to 15 (GLSGGVDS) and methionine 34 each bind ATP. The interval 104–106 (NPD) is interaction with target base in tRNA. Residue cysteine 109 is the Nucleophile of the active site. Cysteines 109 and 208 form a disulfide. Position 134 (glycine 134) interacts with ATP. Residues 158–160 (KDQ) form an interaction with tRNA region. Cysteine 208 acts as the Cysteine persulfide intermediate in catalysis. An interaction with tRNA region spans residues 321-322 (RY).

It belongs to the MnmA/TRMU family.

The protein resides in the cytoplasm. The catalysed reaction is S-sulfanyl-L-cysteinyl-[protein] + uridine(34) in tRNA + AH2 + ATP = 2-thiouridine(34) in tRNA + L-cysteinyl-[protein] + A + AMP + diphosphate + H(+). In terms of biological role, catalyzes the 2-thiolation of uridine at the wobble position (U34) of tRNA, leading to the formation of s(2)U34. This is tRNA-specific 2-thiouridylase MnmA from Mycoplasma mycoides subsp. mycoides SC (strain CCUG 32753 / NCTC 10114 / PG1).